Reading from the N-terminus, the 399-residue chain is S-adenosylmethionine synthase (399 aa).

H17 lines the ATP pocket. D19 is a Mg(2+) binding site. E45 contributes to the K(+) binding site. 2 residues coordinate L-methionine: E58 and Q101. The interval 101–111 is flexible loop; the sequence is QSADIAMGVDQ. ATP-binding positions include 177–179, 244–245, D253, 259–260, A276, and K280; these read DGK, RF, and RK. D253 serves as a coordination point for L-methionine. K284 contributes to the L-methionine binding site.

The protein belongs to the AdoMet synthase family. As to quaternary structure, homotetramer; dimer of dimers. It depends on Mg(2+) as a cofactor. K(+) is required as a cofactor.

The protein resides in the cytoplasm. It catalyses the reaction L-methionine + ATP + H2O = S-adenosyl-L-methionine + phosphate + diphosphate. It functions in the pathway amino-acid biosynthesis; S-adenosyl-L-methionine biosynthesis; S-adenosyl-L-methionine from L-methionine: step 1/1. Catalyzes the formation of S-adenosylmethionine (AdoMet) from methionine and ATP. The overall synthetic reaction is composed of two sequential steps, AdoMet formation and the subsequent tripolyphosphate hydrolysis which occurs prior to release of AdoMet from the enzyme. The polypeptide is S-adenosylmethionine synthase (Bacillus cereus (strain G9842)).